Consider the following 184-residue polypeptide: dTTP/UTP pyrophosphatase (184 aa).

The active-site Proton acceptor is the Asp-67.

It belongs to the Maf family. YhdE subfamily. The cofactor is a divalent metal cation.

The protein resides in the cytoplasm. It catalyses the reaction dTTP + H2O = dTMP + diphosphate + H(+). The catalysed reaction is UTP + H2O = UMP + diphosphate + H(+). Nucleoside triphosphate pyrophosphatase that hydrolyzes dTTP and UTP. May have a dual role in cell division arrest and in preventing the incorporation of modified nucleotides into cellular nucleic acids. This is dTTP/UTP pyrophosphatase from Elusimicrobium minutum (strain Pei191).